The sequence spans 334 residues: N-acetyl-gamma-glutamyl-phosphate reductase (334 aa).

The active site involves C154.

The protein belongs to the NAGSA dehydrogenase family. Type 1 subfamily.

Its subcellular location is the cytoplasm. The enzyme catalyses N-acetyl-L-glutamate 5-semialdehyde + phosphate + NADP(+) = N-acetyl-L-glutamyl 5-phosphate + NADPH + H(+). Its pathway is amino-acid biosynthesis; L-arginine biosynthesis; N(2)-acetyl-L-ornithine from L-glutamate: step 3/4. Its function is as follows. Catalyzes the NADPH-dependent reduction of N-acetyl-5-glutamyl phosphate to yield N-acetyl-L-glutamate 5-semialdehyde. This chain is N-acetyl-gamma-glutamyl-phosphate reductase, found in Salmonella typhi.